A 150-amino-acid polypeptide reads, in one-letter code: SsrA-binding protein (150 aa).

The interval 129–150 (KRQTLKSKEADREMARALRDRH) is disordered.

It belongs to the SmpB family.

It localises to the cytoplasm. In terms of biological role, required for rescue of stalled ribosomes mediated by trans-translation. Binds to transfer-messenger RNA (tmRNA), required for stable association of tmRNA with ribosomes. tmRNA and SmpB together mimic tRNA shape, replacing the anticodon stem-loop with SmpB. tmRNA is encoded by the ssrA gene; the 2 termini fold to resemble tRNA(Ala) and it encodes a 'tag peptide', a short internal open reading frame. During trans-translation Ala-aminoacylated tmRNA acts like a tRNA, entering the A-site of stalled ribosomes, displacing the stalled mRNA. The ribosome then switches to translate the ORF on the tmRNA; the nascent peptide is terminated with the 'tag peptide' encoded by the tmRNA and targeted for degradation. The ribosome is freed to recommence translation, which seems to be the essential function of trans-translation. The sequence is that of SsrA-binding protein from Syntrophotalea carbinolica (strain DSM 2380 / NBRC 103641 / GraBd1) (Pelobacter carbinolicus).